Reading from the N-terminus, the 456-residue chain is Equilibrative nucleoside transporter 2 (456 aa).

The Cytoplasmic portion of the chain corresponds to 1–12 (MAHGNAPRDSYH). Residues 13 to 29 (LVGISFFILGLGTLLPW) traverse the membrane as a helical segment. At 30-68 (NFFITAIPYFQGRLAGTNSSAETPSTNHTSPTDTFNFNN) the chain is on the extracellular side. N-linked (GlcNAc...) asparagine glycosylation is found at Asn47 and Asn56. A helical membrane pass occupies residues 69–93 (WVTLLSQLPLLLFTLLNSFLYQCIP). At 94–97 (ESVR) the chain is on the cytoplasmic side. Residues 98 to 116 (ILGSLLAILLLFALTAALV) traverse the membrane as a helical segment. At 117–124 (KVDLSPGL) the chain is on the extracellular side. The chain crosses the membrane as a helical span at residues 125-143 (FFSITMASVWFINSFCAVL). Residues 144 to 160 (QGSLFGQLGTMPSTYST) are Cytoplasmic-facing. Residues 161-185 (LFLSGQGLAGIFAALAMLTSLASGV) form a helical membrane-spanning segment. The Extracellular portion of the chain corresponds to 186–192 (DPQTSAL). The chain crosses the membrane as a helical span at residues 193-213 (GYFITPCVGILLSIICYLSLP). Residues 214-291 (HLKFARYYLT…VFVVFRKIWL (78 aa)) lie on the Cytoplasmic side of the membrane. Ser251 carries the post-translational modification Phosphoserine. Residues 292-311 (TALCLVLVFTVTLSVFPAIT) form a helical membrane-spanning segment. At 312–323 (AMVTTSSNSPGK) the chain is on the extracellular side. The helical transmembrane segment at 324–342 (WSQFFNPICCFLLFNVMDW) threads the bilayer. Residues 343-359 (LGRSLTSYFLWPDEDSQ) are Cytoplasmic-facing. The chain crosses the membrane as a helical span at residues 360–378 (LLPLLVCLRFLFVPLFMLC). Residues 379 to 393 (HVPQRARLPIIFWQD) are Extracellular-facing. A helical membrane pass occupies residues 394–413 (AYFITFMLLFAISNGYFVSL). Residues 414–431 (TMCLAPRQVLPHEREVAG) are Cytoplasmic-facing. The helical transmembrane segment at 432–452 (ALMTFFLALGLSCGASLSFLF) threads the bilayer. At 453–456 (KALL) the chain is on the extracellular side.

Belongs to the SLC29A/ENT transporter (TC 2.A.57) family. In terms of tissue distribution, expressed in squeletal muscles. Expressed in testis at the blood-brain-barrier.

The protein resides in the apical cell membrane. It localises to the basolateral cell membrane. The enzyme catalyses uridine(out) = uridine(in). It catalyses the reaction inosine(in) = inosine(out). The catalysed reaction is adenosine(in) = adenosine(out). It carries out the reaction thymidine(in) = thymidine(out). The enzyme catalyses hypoxanthine(out) = hypoxanthine(in). It catalyses the reaction adenine(out) = adenine(in). The catalysed reaction is cytidine(in) = cytidine(out). It carries out the reaction thymine(out) = thymine(in). The enzyme catalyses uracil(in) = uracil(out). It catalyses the reaction guanine(out) = guanine(in). The catalysed reaction is guanosine(in) = guanosine(out). Its function is as follows. Bidirectional uniporter involved in the facilitative transport of nucleosides and nucleobases, and contributes to maintaining their cellular homeostasis. Functions as a Na(+)-independent, passive transporter. Involved in the transport of nucleosides such as inosine, adenosine, uridine, thymidine, cytidine and guanosine. Also able to transport purine nucleobases (hypoxanthine, adenine, guanine) and pyrimidine nucleobases (thymine, uracil). Involved in nucleoside transport at basolateral membrane of kidney cells, allowing liver absorption of nucleoside metabolites. Mediates apical nucleoside uptake into Sertoli cells, thereby regulating the transport of nucleosides in testis across the blood-testis-barrier. Mediates both the influx and efflux of hypoxanthine in skeletal muscle microvascular endothelial cells to control the amount of intracellular hypoxanthine available for xanthine oxidase-mediated ROS production. The sequence is that of Equilibrative nucleoside transporter 2 from Rattus norvegicus (Rat).